Reading from the N-terminus, the 295-residue chain is GTPase Era (295 aa).

The region spanning 3–171 (KSGFITVIGR…LELMKKYLPE (169 aa)) is the Era-type G domain. Positions 11 to 18 (GRPNVGKS) are G1. 11-18 (GRPNVGKS) contacts GTP. Residues 37–41 (QTTRN) are G2. The interval 58-61 (DTPG) is G3. Residues 58–62 (DTPGM) and 120–123 (NKID) each bind GTP. The tract at residues 120-123 (NKID) is G4. Residues 150–152 (ISA) are G5. The 78-residue stretch at 202–279 (LSEEVPHGIA…SLKVWVKVKK (78 aa)) folds into the KH type-2 domain.

This sequence belongs to the TRAFAC class TrmE-Era-EngA-EngB-Septin-like GTPase superfamily. Era GTPase family. In terms of assembly, monomer.

Its subcellular location is the cytoplasm. It is found in the cell membrane. In terms of biological role, an essential GTPase that binds both GDP and GTP, with rapid nucleotide exchange. Plays a role in 16S rRNA processing and 30S ribosomal subunit biogenesis and possibly also in cell cycle regulation and energy metabolism. This chain is GTPase Era, found in Clostridium tetani (strain Massachusetts / E88).